Here is a 393-residue protein sequence, read N- to C-terminus: NAD(P)H-quinone oxidoreductase subunit H, chloroplastic (393 aa).

The protein belongs to the complex I 49 kDa subunit family. As to quaternary structure, NDH is composed of at least 16 different subunits, 5 of which are encoded in the nucleus.

Its subcellular location is the plastid. It is found in the chloroplast thylakoid membrane. The catalysed reaction is a plastoquinone + NADH + (n+1) H(+)(in) = a plastoquinol + NAD(+) + n H(+)(out). It carries out the reaction a plastoquinone + NADPH + (n+1) H(+)(in) = a plastoquinol + NADP(+) + n H(+)(out). Functionally, NDH shuttles electrons from NAD(P)H:plastoquinone, via FMN and iron-sulfur (Fe-S) centers, to quinones in the photosynthetic chain and possibly in a chloroplast respiratory chain. The immediate electron acceptor for the enzyme in this species is believed to be plastoquinone. Couples the redox reaction to proton translocation, and thus conserves the redox energy in a proton gradient. This chain is NAD(P)H-quinone oxidoreductase subunit H, chloroplastic, found in Angiopteris evecta (Mule's foot fern).